A 989-amino-acid polypeptide reads, in one-letter code: Cellulose synthase A catalytic subunit 4 [UDP-forming] (989 aa).

At 1–184 the chain is on the cytoplasmic side; that stretch reads MMESGVPPCA…SRIIPISKNK (184 aa). 8 residues coordinate Zn(2+): Cys9, Cys12, Cys20, Cys23, Cys28, Cys31, Cys43, and Cys46. The segment at 9 to 47 adopts an RING-type; degenerate zinc-finger fold; sequence CAACGDDAHAACRACSYALCKACLDEDAAEGRTTCARCG. The segment covering 138 to 149 has biased composition (basic residues); that stretch reads KKEKKASAKKAA. Residues 138–158 are disordered; that stretch reads KKEKKASAKKAAAKAQAPPVE. A helical membrane pass occupies residues 185 to 205; that stretch reads LTPYRAVIIMRLVVLGLFFHY. Residues 206–213 lie on the Extracellular side of the membrane; that stretch reads RITNPVYS. The chain crosses the membrane as a helical span at residues 214–234; the sequence is AFGLWMTSVICEIWFGFSWIL. Topologically, residues 235-772 are cytoplasmic; it reads DQFPKWCPIN…INTIVYPFTS (538 aa). The UDP-alpha-D-glucose site is built by Ser272, Lys278, Glu279, and Asp308. Asp308 is a catalytic residue. Residues 362–389 adopt a coiled-coil conformation; it reads VKERRAMKRDYEEYKVRINALVAKAQKT. Lys449 contributes to the UDP-alpha-D-glucose binding site. Positions 450 and 474 each coordinate Mn(2+). Asp688 is a catalytic residue. A helical transmembrane segment spans residues 773-793; that stretch reads LPLIAYCCLPAICLLTGKFII. Topologically, residues 794–798 are extracellular; sequence PTLSN. Residues 799–819 traverse the membrane as a helical segment; that stretch reads AATIWFLGLFISIIVTSVLEL. At 820–835 the chain is on the cytoplasmic side; it reads RWSGIGIEDWWRNEQF. The chain crosses the membrane as a helical span at residues 836–856; it reads WVIGGVSAHLFAVFQGILKMI. The Extracellular segment spans residues 857-884; the sequence is AGLDTNFTVTAKATDDTEFGELYVFKWT. A glycan (N-linked (GlcNAc...) asparagine) is linked at Asn862. The chain crosses the membrane as a helical span at residues 885 to 905; that stretch reads TVLIPPTSILVLNLVGVVAGF. Residues 906 to 916 lie on the Cytoplasmic side of the membrane; the sequence is SDALNSGYESW. Residues 917-937 form a helical membrane-spanning segment; sequence GPLFGKVFFAMWVIMHLYPFL. Residues 938 to 946 lie on the Extracellular side of the membrane; that stretch reads KGLMGRQNR. The helical transmembrane segment at 947 to 967 threads the bilayer; that stretch reads TPTIVVLWSVLLASVFSLLWV. The Cytoplasmic segment spans residues 968–989; it reads KIDPFIGSSETTTTNSCANFDC.

This sequence belongs to the glycosyltransferase 2 family. Plant cellulose synthase subfamily. Requires Mn(2+) as cofactor. Zn(2+) serves as cofactor.

It localises to the cell membrane. It catalyses the reaction [(1-&gt;4)-beta-D-glucosyl](n) + UDP-alpha-D-glucose = [(1-&gt;4)-beta-D-glucosyl](n+1) + UDP + H(+). Its pathway is glycan metabolism; plant cellulose biosynthesis. In terms of biological role, catalytic subunit of cellulose synthase terminal complexes ('rosettes'), required for beta-1,4-glucan microfibril crystallization, a major mechanism of the cell wall formation. Involved in the secondary cell wall formation. This chain is Cellulose synthase A catalytic subunit 4 [UDP-forming] (CESA4), found in Oryza sativa subsp. japonica (Rice).